Here is a 381-residue protein sequence, read N- to C-terminus: uncharacterized protein (381 aa).

Positions 176 to 292 are disordered; sequence HAAGKIKKSK…EPMVDETPQN (117 aa). Positions 177–186 are enriched in basic residues; sequence AAGKIKKSKN. Residues 187 to 212 are compositionally biased toward basic and acidic residues; it reads QKKDGTLSRPLGKKENKSVVKVKIEE. The span at 276–286 shows a compositional bias: acidic residues; the sequence is DEEDEDEEPMV.

This is an uncharacterized protein from Caenorhabditis elegans.